Consider the following 421-residue polypeptide: Gamma-glutamyl phosphate reductase (421 aa).

The protein belongs to the gamma-glutamyl phosphate reductase family.

It is found in the cytoplasm. It catalyses the reaction L-glutamate 5-semialdehyde + phosphate + NADP(+) = L-glutamyl 5-phosphate + NADPH + H(+). It participates in amino-acid biosynthesis; L-proline biosynthesis; L-glutamate 5-semialdehyde from L-glutamate: step 2/2. Functionally, catalyzes the NADPH-dependent reduction of L-glutamate 5-phosphate into L-glutamate 5-semialdehyde and phosphate. The product spontaneously undergoes cyclization to form 1-pyrroline-5-carboxylate. The protein is Gamma-glutamyl phosphate reductase of Erythrobacter litoralis (strain HTCC2594).